A 105-amino-acid polypeptide reads, in one-letter code: Heat shock protein HspQ (105 aa).

It belongs to the HspQ family.

It localises to the cytoplasm. Involved in the degradation of certain denaturated proteins, including DnaA, during heat shock stress. The chain is Heat shock protein HspQ from Salmonella choleraesuis (strain SC-B67).